A 360-amino-acid polypeptide reads, in one-letter code: Small ribosomal subunit protein mS22 (360 aa).

Ser54 is subject to Phosphoserine. Lys211 carries the N6-acetyllysine modification.

The protein belongs to the mitochondrion-specific ribosomal protein mS22 family. Component of the mitochondrial small ribosomal subunit (mt-SSU). Mature mammalian 55S mitochondrial ribosomes consist of a small (28S) and a large (39S) subunit. The 28S small subunit contains a 12S ribosomal RNA (12S mt-rRNA) and 30 different proteins. The 39S large subunit contains a 16S rRNA (16S mt-rRNA), a copy of mitochondrial valine transfer RNA (mt-tRNA(Val)), which plays an integral structural role, and 52 different proteins.

The protein localises to the mitochondrion. The sequence is that of Small ribosomal subunit protein mS22 (MRPS22) from Homo sapiens (Human).